Consider the following 343-residue polypeptide: Aldehyde reductase 2 (343 aa).

Tyr-177 is a binding site for NADP(+).

This sequence belongs to the NAD(P)-dependent epimerase/dehydratase family. Dihydroflavonol-4-reductase subfamily. In terms of assembly, monomer.

It carries out the reaction a primary alcohol + NADP(+) = an aldehyde + NADPH + H(+). With respect to regulation, inhibited by quercetin and diphenylhydantoin. Catalyzes the asymmetric reduction of o-substituted aliphatic and aromatic aldehydes and ketones to an S-enantiomer. Reduces ethyl 4-chloro-3-oxobutanoate to ethyl (S)-4-chloro-3-hydroxybutanoate. The polypeptide is Aldehyde reductase 2 (Sporidiobolus salmonicolor (Yeast-like fungus)).